A 77-amino-acid polypeptide reads, in one-letter code: Large ribosomal subunit protein bL28 (77 aa).

This sequence belongs to the bacterial ribosomal protein bL28 family.

This chain is Large ribosomal subunit protein bL28, found in Karelsulcia muelleri (strain GWSS) (Sulcia muelleri).